Reading from the N-terminus, the 718-residue chain is Polyribonucleotide nucleotidyltransferase (718 aa).

Residues aspartate 491 and aspartate 497 each coordinate Mg(2+). The KH domain maps to 558–617; that stretch reads PRMLTIKINPEKIRDVIGKGGATIRALTEETGTQIDISDDGTIVIASVDEGQAKEAQRRI. In terms of domain architecture, S1 motif spans 627–695; that stretch reads GQVYDGSVLR…EKGRLRLSVK (69 aa).

Belongs to the polyribonucleotide nucleotidyltransferase family. Requires Mg(2+) as cofactor.

Its subcellular location is the cytoplasm. It catalyses the reaction RNA(n+1) + phosphate = RNA(n) + a ribonucleoside 5'-diphosphate. Its function is as follows. Involved in mRNA degradation. Catalyzes the phosphorolysis of single-stranded polyribonucleotides processively in the 3'- to 5'-direction. The protein is Polyribonucleotide nucleotidyltransferase of Bordetella avium (strain 197N).